The following is an 81-amino-acid chain: Small ribosomal subunit protein bS16 (81 aa).

It belongs to the bacterial ribosomal protein bS16 family.

The chain is Small ribosomal subunit protein bS16 from Clostridium botulinum (strain Eklund 17B / Type B).